Consider the following 166-residue polypeptide: Transcription elongation factor GreA (166 aa).

This sequence belongs to the GreA/GreB family.

In terms of biological role, necessary for efficient RNA polymerase transcription elongation past template-encoded arresting sites. The arresting sites in DNA have the property of trapping a certain fraction of elongating RNA polymerases that pass through, resulting in locked ternary complexes. Cleavage of the nascent transcript by cleavage factors such as GreA or GreB allows the resumption of elongation from the new 3'terminus. GreA releases sequences of 2 to 3 nucleotides. This chain is Transcription elongation factor GreA, found in Anaeromyxobacter sp. (strain K).